We begin with the raw amino-acid sequence, 359 residues long: Membrane-bound lytic murein transglycosylase C (359 aa).

A signal peptide spans Met1–Ser16. A lipid anchor (N-palmitoyl cysteine) is attached at Cys17. A lipid anchor (S-diacylglycerol cysteine) is attached at Cys17.

This sequence belongs to the transglycosylase Slt family.

The protein localises to the cell outer membrane. The enzyme catalyses Exolytic cleavage of the (1-&gt;4)-beta-glycosidic linkage between N-acetylmuramic acid (MurNAc) and N-acetylglucosamine (GlcNAc) residues in peptidoglycan, from either the reducing or the non-reducing ends of the peptidoglycan chains, with concomitant formation of a 1,6-anhydrobond in the MurNAc residue.. In terms of biological role, murein-degrading enzyme. May play a role in recycling of muropeptides during cell elongation and/or cell division. The chain is Membrane-bound lytic murein transglycosylase C from Shigella sonnei (strain Ss046).